Reading from the N-terminus, the 324-residue chain is Putative 12-oxophytodienoate reductase-like protein 1 (324 aa).

M1 is modified (N-acetylmethionine). FMN contacts are provided by residues 14–16 (PMA), A47, and Q89. Positions 99–113 (QDCQPNGESPVSSTD) are enriched in polar residues. Residues 99-128 (QDCQPNGESPVSSTDKPFADDPSNEFTPPR) form a disordered region. Residue 160-163 (HGAH) coordinates substrate. Y165 (proton donor) is an active-site residue. R212 is a binding site for FMN. A substrate-binding site is contributed by R252. Residues G282 and 303-304 (GR) contribute to the FMN site.

It belongs to the NADH:flavin oxidoreductase/NADH oxidase family. FMN is required as a cofactor.

Its function is as follows. Putative oxophytodienoate reductase that may be involved in the biosynthesis or metabolism of oxylipin signaling molecules. The sequence is that of Putative 12-oxophytodienoate reductase-like protein 1 from Arabidopsis thaliana (Mouse-ear cress).